A 196-amino-acid polypeptide reads, in one-letter code: MGTQLVLGSSSKIRKAVLEAFRIPFICVSSDFDERSITYSGDPFEYTRELAWNKANAVRSQGFSDSLIITADTVVVYEGEVFNKPESEEHAVEMLRTLSGTSHSVITSLVLMQNEKVASASETTQVSFIDIPPQHLKTYVQAFSSLKRCGGYCVQDGGGLIIKQIEGCVYNIQGLPIKTLNQLLMEFNISLWDYLA.

Aspartate 72 serves as the catalytic Proton acceptor.

It belongs to the Maf family. A divalent metal cation serves as cofactor.

The protein localises to the cytoplasm. The enzyme catalyses a ribonucleoside 5'-triphosphate + H2O = a ribonucleoside 5'-phosphate + diphosphate + H(+). It catalyses the reaction a 2'-deoxyribonucleoside 5'-triphosphate + H2O = a 2'-deoxyribonucleoside 5'-phosphate + diphosphate + H(+). Functionally, nucleoside triphosphate pyrophosphatase. May have a dual role in cell division arrest and in preventing the incorporation of modified nucleotides into cellular nucleic acids. The protein is Nucleoside triphosphate pyrophosphatase of Chlamydia muridarum (strain MoPn / Nigg).